The sequence spans 121 residues: UPF0102 protein Strop_1320 (121 aa).

It belongs to the UPF0102 family.

The protein is UPF0102 protein Strop_1320 of Salinispora tropica (strain ATCC BAA-916 / DSM 44818 / JCM 13857 / NBRC 105044 / CNB-440).